The primary structure comprises 197 residues: Recombination protein RecR (197 aa).

The C4-type zinc finger occupies 57–72; it reads CSVCFGITEEDPCRLC. In terms of domain architecture, Toprim spans 79 to 174; sequence TSLCVVEEPQ…RVTRLAHGIP (96 aa).

It belongs to the RecR family.

Its function is as follows. May play a role in DNA repair. It seems to be involved in an RecBC-independent recombinational process of DNA repair. It may act with RecF and RecO. This is Recombination protein RecR from Geobacter metallireducens (strain ATCC 53774 / DSM 7210 / GS-15).